A 231-amino-acid polypeptide reads, in one-letter code: UMP-CMP kinase (231 aa).

An ATP-binding site is contributed by 57–62 (GSGKGT). The NMP stretch occupies residues 77-106 (SAGDLLRREIASGSAYGSVILSTIREGKIV). A ribonucleoside 5'-phosphate contacts are provided by residues Arg83, 104 to 106 (KIV), and 131 to 134 (GFPR). Asn138 serves as a coordination point for CMP. Residues 169–177 (NRNQGRVDD) are LID. An ATP-binding site is contributed by Arg170. Positions 174 and 185 each coordinate a ribonucleoside 5'-phosphate. Gly213 serves as a coordination point for ATP.

This sequence belongs to the adenylate kinase family. UMP-CMP kinase subfamily. As to quaternary structure, monomer. The cofactor is Mg(2+).

It localises to the cytoplasm. Its subcellular location is the nucleus. The enzyme catalyses CMP + ATP = CDP + ADP. It catalyses the reaction dCMP + ATP = dCDP + ADP. The catalysed reaction is UMP + ATP = UDP + ADP. In terms of biological role, catalyzes the phosphorylation of pyrimidine nucleoside monophosphates at the expense of ATP. Plays an important role in de novo pyrimidine nucleotide biosynthesis. Has preference for UMP and CMP as phosphate acceptors. The chain is UMP-CMP kinase from Prunus armeniaca (Apricot).